Here is a 318-residue protein sequence, read N- to C-terminus: Ribose-phosphate pyrophosphokinase (318 aa).

ATP-binding positions include 46-48 and 105-106; these read DGE and RQ. His-139 and Asp-178 together coordinate Mg(2+). The active site involves Lys-201. D-ribose 5-phosphate-binding positions include Arg-203, Asp-227, and 231–235; that span reads DTAGT.

This sequence belongs to the ribose-phosphate pyrophosphokinase family. Class I subfamily. Homohexamer. Mg(2+) serves as cofactor.

It localises to the cytoplasm. The enzyme catalyses D-ribose 5-phosphate + ATP = 5-phospho-alpha-D-ribose 1-diphosphate + AMP + H(+). The protein operates within metabolic intermediate biosynthesis; 5-phospho-alpha-D-ribose 1-diphosphate biosynthesis; 5-phospho-alpha-D-ribose 1-diphosphate from D-ribose 5-phosphate (route I): step 1/1. Its function is as follows. Involved in the biosynthesis of the central metabolite phospho-alpha-D-ribosyl-1-pyrophosphate (PRPP) via the transfer of pyrophosphoryl group from ATP to 1-hydroxyl of ribose-5-phosphate (Rib-5-P). The polypeptide is Ribose-phosphate pyrophosphokinase (Helicobacter pylori (strain ATCC 700392 / 26695) (Campylobacter pylori)).